Here is a 155-residue protein sequence, read N- to C-terminus: Ribonuclease H (155 aa).

In terms of domain architecture, RNase H type-1 spans 9-150 (DGQQVEMWTD…ADALANQGME (142 aa)). Residues D18, E56, D78, and D142 each contribute to the Mg(2+) site.

It belongs to the RNase H family. In terms of assembly, monomer. Mg(2+) serves as cofactor.

The protein resides in the cytoplasm. It carries out the reaction Endonucleolytic cleavage to 5'-phosphomonoester.. Functionally, endonuclease that specifically degrades the RNA of RNA-DNA hybrids. The chain is Ribonuclease H from Bordetella pertussis (strain Tohama I / ATCC BAA-589 / NCTC 13251).